Here is a 525-residue protein sequence, read N- to C-terminus: ATP synthase subunit alpha (525 aa).

An ATP-binding site is contributed by 171-178 (GDRQTGKS).

It belongs to the ATPase alpha/beta chains family. In terms of assembly, F-type ATPases have 2 components, CF(1) - the catalytic core - and CF(0) - the membrane proton channel. CF(1) has five subunits: alpha(3), beta(3), gamma(1), delta(1), epsilon(1). CF(0) has three main subunits: a(1), b(2) and c(9-12). The alpha and beta chains form an alternating ring which encloses part of the gamma chain. CF(1) is attached to CF(0) by a central stalk formed by the gamma and epsilon chains, while a peripheral stalk is formed by the delta and b chains.

The protein resides in the cell inner membrane. It carries out the reaction ATP + H2O + 4 H(+)(in) = ADP + phosphate + 5 H(+)(out). Produces ATP from ADP in the presence of a proton gradient across the membrane. The alpha chain is a regulatory subunit. The polypeptide is ATP synthase subunit alpha (Flavobacterium johnsoniae (strain ATCC 17061 / DSM 2064 / JCM 8514 / BCRC 14874 / CCUG 350202 / NBRC 14942 / NCIMB 11054 / UW101) (Cytophaga johnsonae)).